The chain runs to 689 residues: Glycine--tRNA ligase beta subunit (689 aa).

The protein belongs to the class-II aminoacyl-tRNA synthetase family. As to quaternary structure, tetramer of two alpha and two beta subunits.

Its subcellular location is the cytoplasm. It carries out the reaction tRNA(Gly) + glycine + ATP = glycyl-tRNA(Gly) + AMP + diphosphate. This chain is Glycine--tRNA ligase beta subunit, found in Dictyoglomus thermophilum (strain ATCC 35947 / DSM 3960 / H-6-12).